Consider the following 315-residue polypeptide: Voltage-dependent calcium channel gamma-3 subunit (315 aa).

4 helical membrane-spanning segments follow: residues 8–28 (IQMLITTVGAFAAFSLMTIAV), 104–124 (SSVFPILSVTLLFFGGLCVAA), 135–155 (ILSAGIFFVSAGLSNIIGIIV), and 181–201 (FGAFSFIIAEIVGVVAVHIYI). A Phosphoserine modification is found at Ser248.

Belongs to the PMP-22/EMP/MP20 family. CACNG subfamily. In terms of assembly, the L-type calcium channel is composed of five subunits: alpha-1, alpha-2/delta, beta and gamma. Acts as an auxiliary subunit for AMPA-selective glutamate receptors (AMPARs). Found in a complex with GRIA1, GRIA2, GRIA3, GRIA4, CNIH2, CNIH3, CACNG2, CACNG4, CACNG5, CACNG7 and CACNG8. Interacts with AP4M1 and GRIA1; associates GRIA1 with the adaptor protein complex 4 (AP-4) to target GRIA1 to the somatodendritic compartment of neurons.

Its subcellular location is the membrane. Functionally, regulates the trafficking to the somatodendritic compartment and gating properties of AMPA-selective glutamate receptors (AMPARs). Promotes their targeting to the cell membrane and synapses and modulates their gating properties by slowing their rates of activation, deactivation and desensitization. Does not show subunit-specific AMPA receptor regulation and regulates all AMPAR subunits. Thought to stabilize the calcium channel in an inactivated (closed) state. In Homo sapiens (Human), this protein is Voltage-dependent calcium channel gamma-3 subunit (CACNG3).